A 670-amino-acid chain; its full sequence is DNA ligase (670 aa).

Residues 32 to 36, 81 to 82, and Glu-113 contribute to the NAD(+) site; these read DAEYD and SL. Lys-115 acts as the N6-AMP-lysine intermediate in catalysis. 4 residues coordinate NAD(+): Arg-136, Glu-173, Lys-290, and Lys-314. Zn(2+) contacts are provided by Cys-408, Cys-411, Cys-426, and Cys-432. Positions 592-670 constitute a BRCT domain; it reads ESDSPFAGKT…EAEMIRLLGE (79 aa).

It belongs to the NAD-dependent DNA ligase family. LigA subfamily. It depends on Mg(2+) as a cofactor. Mn(2+) is required as a cofactor.

It carries out the reaction NAD(+) + (deoxyribonucleotide)n-3'-hydroxyl + 5'-phospho-(deoxyribonucleotide)m = (deoxyribonucleotide)n+m + AMP + beta-nicotinamide D-nucleotide.. Functionally, DNA ligase that catalyzes the formation of phosphodiester linkages between 5'-phosphoryl and 3'-hydroxyl groups in double-stranded DNA using NAD as a coenzyme and as the energy source for the reaction. It is essential for DNA replication and repair of damaged DNA. The sequence is that of DNA ligase from Yersinia pestis bv. Antiqua (strain Antiqua).